The chain runs to 111 residues: Large ribosomal subunit protein uL22 (111 aa).

This sequence belongs to the universal ribosomal protein uL22 family. Part of the 50S ribosomal subunit.

Functionally, this protein binds specifically to 23S rRNA; its binding is stimulated by other ribosomal proteins, e.g. L4, L17, and L20. It is important during the early stages of 50S assembly. It makes multiple contacts with different domains of the 23S rRNA in the assembled 50S subunit and ribosome. Its function is as follows. The globular domain of the protein is located near the polypeptide exit tunnel on the outside of the subunit, while an extended beta-hairpin is found that lines the wall of the exit tunnel in the center of the 70S ribosome. This chain is Large ribosomal subunit protein uL22, found in Acidithiobacillus ferrooxidans (strain ATCC 23270 / DSM 14882 / CIP 104768 / NCIMB 8455) (Ferrobacillus ferrooxidans (strain ATCC 23270)).